Consider the following 61-residue polypeptide: Large ribosomal subunit protein uL30 (61 aa).

Belongs to the universal ribosomal protein uL30 family. As to quaternary structure, part of the 50S ribosomal subunit.

The protein is Large ribosomal subunit protein uL30 of Treponema pallidum subsp. pallidum (strain SS14).